A 524-amino-acid chain; its full sequence is Glutamyl-tRNA(Gln) amidotransferase subunit A (524 aa).

Catalysis depends on charge relay system residues lysine 109 and serine 184. Serine 208 serves as the catalytic Acyl-ester intermediate.

It belongs to the amidase family. GatA subfamily. Heterotrimer of A, B and C subunits.

The catalysed reaction is L-glutamyl-tRNA(Gln) + L-glutamine + ATP + H2O = L-glutaminyl-tRNA(Gln) + L-glutamate + ADP + phosphate + H(+). In terms of biological role, allows the formation of correctly charged Gln-tRNA(Gln) through the transamidation of misacylated Glu-tRNA(Gln) in organisms which lack glutaminyl-tRNA synthetase. The reaction takes place in the presence of glutamine and ATP through an activated gamma-phospho-Glu-tRNA(Gln). The protein is Glutamyl-tRNA(Gln) amidotransferase subunit A of Tropheryma whipplei (strain TW08/27) (Whipple's bacillus).